A 134-amino-acid chain; its full sequence is Secretin (134 aa).

Residues 1–21 (MATRALLLLLLLPPLLLLAGC) form the signal peptide. Positions 22 to 31 (AARPAPPRAP) are excised as a propeptide. Valine 59 carries the post-translational modification Valine amide. Residue serine 63 is modified to Phosphoserine. The propeptide occupies 63–134 (SQQDPENNTA…PAAEGSPMPP (72 aa)).

It belongs to the glucagon family.

It is found in the secreted. Hormone involved in different processes, such as regulation of the pH of the duodenal content, food intake and water homeostasis. Exerts its biological effects by binding to secretin receptor (SCTR), a G-protein coupled receptor expressed in the basolateral domain of several cells. Acts as a key gastrointestinal hormone by regulating the pH of the duodenal content. Secreted by S cells of the duodenum in the crypts of Lieberkuehn and regulates the pH of the duodenum by (1) inhibiting the secretion of gastric acid from the parietal cells of the stomach and (2) stimulating the production of bicarbonate (NaHCO(3)) from the ductal cells of the pancreas. Production of bicarbonate is essential to neutralize the pH and ensure no damage is done to the small intestine by the gastric acid. In addition to regulating the pH of the duodenal content, plays a central role in diet induced thermogenesis: acts as a non-sympathetic brown fat (BAT) activator mediating prandial thermogenesis, which consequentially induces satiation. Mechanistically, secretin released by the gut after a meal binds to secretin receptor (SCTR) in brown adipocytes, activating brown fat thermogenesis by stimulating lipolysis, which is sensed in the brain and promotes satiation. Also able to stimulate lipolysis in white adipocytes. Also plays an important role in cellular osmoregulation: released into the systemic circulation in response to hyperosmolality and acts at different levels in the hypothalamus, pituitary and kidney to regulate water homeostasis. Also plays a role in the central nervous system, possibly by acting as a neuropeptide hormone: required for hippocampal synaptic function and neural progenitor cells maintenance. This is Secretin from Sus scrofa (Pig).